A 430-amino-acid chain; its full sequence is MIKLRDELGTATTDSAQKILLLGSGELGKEIAIEAQRLGVEVVAVDRYANAPAMQVAHRSYVGNMMDKDFLWSVVEREKPDAIIPEIEAINLDALFEFEKDGYFVVPNARATWIAMHRERLRETLVKEAKVPTSRYMYATTLDELYEACEKIGYPCHTKAIMSSSGKGSYFVKGPEDIPKAWEEAKTKARGSAEKIIVEEHIDFDVEVTELAVRHFDENGEIVTTFPKPVGHYQIDGDYHASWQPAEISEKAEREVYRIAKRITDVLGGLGIFGVEMFVKGDKVWANEVSPRPHDTGMVTLASHPPGFSEFALHLRAVLGLPIPGEWVDGYRLFPMLIPAATHVIKAKVSGYSPRFRGLVKALSVPNATVRLFGKPEAYVGRRLGIALAWDKDVEVAKRKAEMVAHMIELRTRSSDWHDQNYEKRKHLLR.

Residues 26–27 (EL) and E86 contribute to the N(1)-(5-phospho-beta-D-ribosyl)glycinamide site. Residues R118, K159, 199–202 (EEHI), and E207 each bind ATP. The region spanning 123-319 (ETLVKEAKVP…EFALHLRAVL (197 aa)) is the ATP-grasp domain. E276 and E288 together coordinate Mg(2+). N(1)-(5-phospho-beta-D-ribosyl)glycinamide is bound by residues D295, K375, and 382–383 (RR).

This sequence belongs to the PurK/PurT family. In terms of assembly, homodimer.

The enzyme catalyses N(1)-(5-phospho-beta-D-ribosyl)glycinamide + formate + ATP = N(2)-formyl-N(1)-(5-phospho-beta-D-ribosyl)glycinamide + ADP + phosphate + H(+). It participates in purine metabolism; IMP biosynthesis via de novo pathway; N(2)-formyl-N(1)-(5-phospho-D-ribosyl)glycinamide from N(1)-(5-phospho-D-ribosyl)glycinamide (formate route): step 1/1. Functionally, involved in the de novo purine biosynthesis. Catalyzes the transfer of formate to 5-phospho-ribosyl-glycinamide (GAR), producing 5-phospho-ribosyl-N-formylglycinamide (FGAR). Formate is provided by PurU via hydrolysis of 10-formyl-tetrahydrofolate. The sequence is that of Formate-dependent phosphoribosylglycinamide formyltransferase from Pyrococcus horikoshii (strain ATCC 700860 / DSM 12428 / JCM 9974 / NBRC 100139 / OT-3).